Consider the following 105-residue polypeptide: Nucleoid-associated protein PTH_0052 (105 aa).

The protein belongs to the YbaB/EbfC family. Homodimer.

It is found in the cytoplasm. Its subcellular location is the nucleoid. In terms of biological role, binds to DNA and alters its conformation. May be involved in regulation of gene expression, nucleoid organization and DNA protection. In Pelotomaculum thermopropionicum (strain DSM 13744 / JCM 10971 / SI), this protein is Nucleoid-associated protein PTH_0052.